Consider the following 326-residue polypeptide: Putative replication protein B (326 aa).

It belongs to the ParB family.

This Sinorhizobium fredii (strain NBRC 101917 / NGR234) protein is Putative replication protein B.